Reading from the N-terminus, the 299-residue chain is Diaminopimelate epimerase (299 aa).

The substrate site is built by N15, Q47, and N67. C76 serves as the catalytic Proton donor. Substrate contacts are provided by residues 77–78 (GN), N163, N197, and 215–216 (ER). C224 acts as the Proton acceptor in catalysis. Substrate is bound at residue 225 to 226 (GS).

Belongs to the diaminopimelate epimerase family. As to quaternary structure, homodimer.

It localises to the cytoplasm. It carries out the reaction (2S,6S)-2,6-diaminopimelate = meso-2,6-diaminopimelate. It functions in the pathway amino-acid biosynthesis; L-lysine biosynthesis via DAP pathway; DL-2,6-diaminopimelate from LL-2,6-diaminopimelate: step 1/1. Functionally, catalyzes the stereoinversion of LL-2,6-diaminopimelate (L,L-DAP) to meso-diaminopimelate (meso-DAP), a precursor of L-lysine and an essential component of the bacterial peptidoglycan. In Agrobacterium fabrum (strain C58 / ATCC 33970) (Agrobacterium tumefaciens (strain C58)), this protein is Diaminopimelate epimerase.